The primary structure comprises 544 residues: Ribosomal oxygenase 1 (544 aa).

The segment at 1–78 (MERKHMSALS…HEGERDCREM (78 aa)) is disordered. The span at 10–19 (SIYQSLSGGK) shows a compositional bias: polar residues. Over residues 42–53 (PSKKATKKKGTK) the composition is skewed to basic residues. Basic and acidic residues predominate over residues 63–78 (SSEKEKHEGERDCREM). Residues 197-342 (CSIRMLNPQA…DLMLKLMPAA (146 aa)) form the JmjC domain. Fe cation-binding residues include His-243, Asp-245, and His-308.

The protein belongs to the ROX family. NO66 subfamily. Requires Fe(2+) as cofactor.

It localises to the nucleus. Its subcellular location is the nucleolus. It is found in the nucleoplasm. It catalyses the reaction N(6),N(6)-dimethyl-L-lysyl(36)-[histone H3] + 2 2-oxoglutarate + 2 O2 = L-lysyl(36)-[histone H3] + 2 formaldehyde + 2 succinate + 2 CO2. It carries out the reaction N(6)-methyl-L-lysyl-[protein] + 2-oxoglutarate + O2 = L-lysyl-[protein] + formaldehyde + succinate + CO2. The enzyme catalyses L-histidyl-[protein] + 2-oxoglutarate + O2 = (3S)-3-hydroxy-L-histidyl-[protein] + succinate + CO2. Functionally, oxygenase that can act as both a histone lysine demethylase and a ribosomal histidine hydroxylase. Specifically demethylates 'Lys-4' (H3K4me) and 'Lys-36' (H3K36me) of histone H3, thereby playing a central role in histone code. Preferentially demethylates trimethylated H3 'Lys-4' (H3K4me3) and monomethylated H3 'Lys-4' (H3K4me1) residues, while it has weaker activity for dimethylated H3 'Lys-36' (H3K36me2). Also catalyzes demethylation of non-histone proteins. Also catalyzes the hydroxylation of 60S ribosomal protein L8 on 'His-216', thereby playing a role in ribosome biogenesis. This is Ribosomal oxygenase 1 (riox1) from Danio rerio (Zebrafish).